Here is a 361-residue protein sequence, read N- to C-terminus: Caffeic acid 3-O-methyltransferase 2 (361 aa).

128–134 (MNQDKVL) contributes to the substrate binding site. The tract at residues 160–178 (AFEYHGTDPRFNKVFNQGM) is substrate binding. S-adenosyl-L-methionine contacts are provided by Gly-206, Asp-229, Asp-249, Met-250, and Lys-263. The active-site Proton acceptor is the His-267.

This sequence belongs to the class I-like SAM-binding methyltransferase superfamily. Cation-independent O-methyltransferase family. COMT subfamily. Homodimer.

It catalyses the reaction (E)-caffeate + S-adenosyl-L-methionine = (E)-ferulate + S-adenosyl-L-homocysteine + H(+). Its pathway is aromatic compound metabolism; phenylpropanoid biosynthesis. Its function is as follows. Catalyzes the conversion of caffeic acid to ferulic acid and of 5-hydroxyferulic acid to sinapic acid. The resulting products may subsequently be converted to the corresponding alcohols that are incorporated into lignins. The polypeptide is Caffeic acid 3-O-methyltransferase 2 (COMT2) (Ocimum basilicum (Sweet basil)).